A 631-amino-acid chain; its full sequence is Putative ATP-dependent DNA helicase Q1 (631 aa).

Residues 118-293 form the Helicase ATP-binding domain; that stretch reads INAVMSKEDA…KDMLGIQAAL (176 aa). 131-138 lines the ATP pocket; it reads LSTGGGKS. Residues 237–240 carry the DEVH box motif; that stretch reads DEVH. One can recognise a Helicase C-terminal domain in the interval 318–466; it reads CTEEIAKTIK…NLYNMVRYAA (149 aa). 4 residues coordinate Zn(2+): C471, C489, C493, and C496. The tract at residues 610–631 is disordered; sequence ESKSRKRKASSSVEEEDVMVLD. Acidic residues predominate over residues 622-631; the sequence is VEEEDVMVLD.

The protein belongs to the helicase family. RecQ subfamily. Zn(2+) is required as a cofactor.

Its subcellular location is the nucleus. The enzyme catalyses Couples ATP hydrolysis with the unwinding of duplex DNA by translocating in the 3'-5' direction.. The catalysed reaction is ATP + H2O = ADP + phosphate + H(+). Its function is as follows. DNA helicase that may play a role in the repair of DNA that is damaged by ultraviolet light or other mutagens. Exhibits a magnesium-dependent ATP-dependent DNA-helicase activity that unwinds single- and double-stranded DNA in a 3'-5' direction. This Caenorhabditis elegans protein is Putative ATP-dependent DNA helicase Q1.